We begin with the raw amino-acid sequence, 159 residues long: uncharacterized protein (159 aa).

This is an uncharacterized protein from Aquifex aeolicus (strain VF5).